We begin with the raw amino-acid sequence, 953 residues long: Coatomer subunit beta (953 aa).

The residue at position 2 (threonine 2) is an N-acetylthreonine. HEAT repeat units lie at residues 96 to 131 (HEMI…KEAE), 132 to 168 (LLEP…NFEN), 240 to 276 (SERA…SAPT), 277 to 314 (AIKA…HPAH), 316 to 353 (RVLQ…SRNV), and 396 to 433 (DMAA…RFDN). The residue at position 494 (lysine 494) is an N6-acetyllysine.

As to quaternary structure, oligomeric complex that consists of at least the alpha, beta, beta', gamma, delta, epsilon and zeta subunits. Interacts with SCYL1. Interacts with CAPN8. Interacts with COPG1. Interacts with ARF1 (myristoylated); this interaction is required for binding of COPB1 to Golgi membranes. Interacts (via trunk domain) with ARF1 (via switch I region); the interaction is direct. Interacts with KCNK2 (via N-terminus); this interaction increases the channel-mediated whole cell currents and promotes plasma membrane expression of KCNK2. Interacts with PRKCE. Interacts with STX17. Interacts with TMEM115. Interacts with TMEM41B. In terms of processing, proteolytically cleaved between Ser-528 and Ser-529 by CAPN8.

It localises to the cytoplasm. Its subcellular location is the golgi apparatus membrane. The protein resides in the cytoplasmic vesicle. The protein localises to the COPI-coated vesicle membrane. It is found in the cell membrane. It localises to the endoplasmic reticulum-Golgi intermediate compartment. Its subcellular location is the microsome membrane. In terms of biological role, the coatomer is a cytosolic protein complex that binds to dilysine motifs and reversibly associates with Golgi non-clathrin-coated vesicles, which further mediate biosynthetic protein transport from the ER, via the Golgi up to the trans Golgi network. Coatomer complex is required for budding from Golgi membranes, and is essential for the retrograde Golgi-to-ER transport of dilysine-tagged proteins. In mammals, the coatomer can only be recruited by membranes associated to ADP-ribosylation factors (ARFs), which are small GTP-binding proteins; the complex also influences the Golgi structural integrity, as well as the processing, activity, and endocytic recycling of LDL receptors. Involved in the Golgi disassembly and reassembly processes during cell cycle. Involved in autophagy by playing a role in early endosome function. Plays a role in organellar compartmentalization of secretory compartments including endoplasmic reticulum (ER)-Golgi intermediate compartment (ERGIC), Golgi, trans-Golgi network (TGN) and recycling endosomes, and in biosynthetic transport of CAV1. Plays a functional role in facilitating the transport of kappa-type opioid receptor mRNAs into axons and enhances translation of these proteins in the axonal compartment of dorsal root ganglion (DRG) cells. Required for limiting lipid storage in lipid droplets. Involved in lipid homeostasis by regulating the presence of perilipin family members PLIN2 and PLIN3 at the lipid droplet surface and promoting the association of adipocyte triglyceride lipase (PNPLA2) with the lipid droplet surface to mediate lipolysis. In Rattus norvegicus (Rat), this protein is Coatomer subunit beta (Copb1).